The chain runs to 93 residues: UPF0223 protein SAG0995 (93 aa).

This sequence belongs to the UPF0223 family.

This chain is UPF0223 protein SAG0995, found in Streptococcus agalactiae serotype V (strain ATCC BAA-611 / 2603 V/R).